Here is a 397-residue protein sequence, read N- to C-terminus: Tryptophan synthase beta chain (397 aa).

Residue Lys89 is modified to N6-(pyridoxal phosphate)lysine.

The protein belongs to the TrpB family. Tetramer of two alpha and two beta chains. It depends on pyridoxal 5'-phosphate as a cofactor.

The catalysed reaction is (1S,2R)-1-C-(indol-3-yl)glycerol 3-phosphate + L-serine = D-glyceraldehyde 3-phosphate + L-tryptophan + H2O. The protein operates within amino-acid biosynthesis; L-tryptophan biosynthesis; L-tryptophan from chorismate: step 5/5. Functionally, the beta subunit is responsible for the synthesis of L-tryptophan from indole and L-serine. This chain is Tryptophan synthase beta chain, found in Leptospira interrogans serogroup Icterohaemorrhagiae serovar copenhageni (strain Fiocruz L1-130).